A 122-amino-acid chain; its full sequence is Large ribosomal subunit protein uL14 (122 aa).

This sequence belongs to the universal ribosomal protein uL14 family. Part of the 50S ribosomal subunit. Forms a cluster with proteins L3 and L19. In the 70S ribosome, L14 and L19 interact and together make contacts with the 16S rRNA in bridges B5 and B8.

Binds to 23S rRNA. Forms part of two intersubunit bridges in the 70S ribosome. In Sphingopyxis alaskensis (strain DSM 13593 / LMG 18877 / RB2256) (Sphingomonas alaskensis), this protein is Large ribosomal subunit protein uL14.